A 124-amino-acid chain; its full sequence is Small ribosomal subunit protein uS12 (124 aa).

Asp89 bears the 3-methylthioaspartic acid mark.

It belongs to the universal ribosomal protein uS12 family. In terms of assembly, part of the 30S ribosomal subunit. Contacts proteins S8 and S17. May interact with IF1 in the 30S initiation complex.

Its function is as follows. With S4 and S5 plays an important role in translational accuracy. In terms of biological role, interacts with and stabilizes bases of the 16S rRNA that are involved in tRNA selection in the A site and with the mRNA backbone. Located at the interface of the 30S and 50S subunits, it traverses the body of the 30S subunit contacting proteins on the other side and probably holding the rRNA structure together. The combined cluster of proteins S8, S12 and S17 appears to hold together the shoulder and platform of the 30S subunit. The sequence is that of Small ribosomal subunit protein uS12 from Serratia proteamaculans (strain 568).